The following is an 879-amino-acid chain: Exocyst complex component 1 (879 aa).

Positions 29 to 94 (SQYSESEYDP…ATSLGNNDGD (66 aa)) are disordered. Basic and acidic residues predominate over residues 40–52 (ETTHSESDSENHH). The segment covering 64–76 (FLSQSNDNVSNGP) has biased composition (polar residues). The span at 77–91 (SNNTLSSSATSLGNN) shows a compositional bias: low complexity. Coiled-coil stretches lie at residues 165-187 (YNKQ…NKME) and 226-248 (KGLK…KLKS). Disordered stretches follow at residues 371-413 (QNDF…GKDG) and 455-557 (GQRN…PDAP). A compositionally biased stretch (low complexity) spans 373–409 (DFFSSSSSSKKSIDSLNNNTSTSTPSKNSSSSSSSSS). Residues 480-500 (KKSSKKDKKDKKDKKDKKDKK) show a composition bias toward basic residues. Positions 519-532 (DSNSPKSPNNAVNG) are enriched in polar residues. Positions 541-551 (SPPPPPPPPPK) are enriched in pro residues.

It belongs to the SEC3 family. As to quaternary structure, the exocyst complex is composed of sec3/exoc1, sec5/exoc2, sec6/exoc3, sec8/exoc4, sec10/exoc5, sec15/exoc6, exo70/exoc7 and exo84/exoc8.

The protein localises to the midbody. It localises to the midbody ring. Functionally, component of the exocyst complex involved in the docking of exocytic vesicles with fusion sites on the plasma membrane. The protein is Exocyst complex component 1 (exoc1) of Dictyostelium discoideum (Social amoeba).